Reading from the N-terminus, the 359-residue chain is Glycerol-1-phosphate dehydrogenase [NAD(P)+] (359 aa).

Residues 107–111 (GRVID) and 129–132 (TAAS) each bind NAD(+). Asp-134 serves as a coordination point for substrate. Ser-138 contributes to the NAD(+) binding site. Substrate is bound at residue Asp-181. Asp-181 and His-261 together coordinate Zn(2+). His-265 is a binding site for substrate. His-277 contributes to the Zn(2+) binding site.

Belongs to the glycerol-1-phosphate dehydrogenase family. Zn(2+) is required as a cofactor.

The protein localises to the cytoplasm. The catalysed reaction is sn-glycerol 1-phosphate + NAD(+) = dihydroxyacetone phosphate + NADH + H(+). It carries out the reaction sn-glycerol 1-phosphate + NADP(+) = dihydroxyacetone phosphate + NADPH + H(+). It participates in membrane lipid metabolism; glycerophospholipid metabolism. Its function is as follows. Catalyzes the NAD(P)H-dependent reduction of dihydroxyacetonephosphate (DHAP or glycerone phosphate) to glycerol 1-phosphate (G1P). The G1P thus generated is used as the glycerophosphate backbone of phospholipids in the cellular membranes of Archaea. This is Glycerol-1-phosphate dehydrogenase [NAD(P)+] from Methanospirillum hungatei JF-1 (strain ATCC 27890 / DSM 864 / NBRC 100397 / JF-1).